The chain runs to 327 residues: ATPase GET3 (327 aa).

27–34 provides a ligand contact to ATP; the sequence is KGGVGKTT. D56 is an active-site residue. E231 and N258 together coordinate ATP. Positions 269 and 272 each coordinate Zn(2+).

The protein belongs to the arsA ATPase family. Homodimer. Component of the Golgi to ER traffic (GET) complex, which is composed of GET1, GET2 and GET3. Within the complex, GET1 and GET2 form a heterotetramer which is stabilized by phosphatidylinositol binding and which binds to the GET3 homodimer. Interacts with the chloride channel protein GEF1.

It localises to the cytoplasm. It is found in the endoplasmic reticulum. Its subcellular location is the golgi apparatus. Its function is as follows. ATPase required for the post-translational delivery of tail-anchored (TA) proteins to the endoplasmic reticulum. Recognizes and selectively binds the transmembrane domain of TA proteins in the cytosol. This complex then targets to the endoplasmic reticulum by membrane-bound receptors GET1 and GET2, where the tail-anchored protein is released for insertion. This process is regulated by ATP binding and hydrolysis. ATP binding drives the homodimer towards the closed dimer state, facilitating recognition of newly synthesized TA membrane proteins. ATP hydrolysis is required for insertion. Subsequently, the homodimer reverts towards the open dimer state, lowering its affinity for the GET1-GET2 receptor, and returning it to the cytosol to initiate a new round of targeting. Cooperates with the HDEL receptor ERD2 to mediate the ATP-dependent retrieval of resident ER proteins that contain a C-terminal H-D-E-L retention signal from the Golgi to the ER. Involved in low-level resistance to the oxyanions arsenite and arsenate, and in heat tolerance. The protein is ATPase GET3 of Yarrowia lipolytica (strain CLIB 122 / E 150) (Yeast).